The primary structure comprises 3163 residues: Genome polyprotein (3163 aa).

The region spanning 219-362 is the Peptidase S30 domain; the sequence is KMSDQGVDML…KTMSLKIVHF (144 aa). Residues histidine 270, aspartate 279, and serine 313 each act as for P1 proteinase activity in the active site. An Involved in interaction with stylet and aphid transmission motif is present at residues 414 to 417; it reads KITC. The short motif at 672-674 is the Involved in virions binding and aphid transmission element; that stretch reads PTK. The 123-residue stretch at 698–820 folds into the Peptidase C6 domain; sequence MYIAKEGYCY…ESSLKHYRVG (123 aa). Active-site for helper component proteinase activity residues include cysteine 706 and histidine 779. A Helicase ATP-binding domain is found at 1300-1452; the sequence is KIAHESDKDI…TQYPVSISTE (153 aa). 1313–1320 contacts ATP; sequence GAVGSGKS. The DEAH box motif lies at 1402 to 1405; that stretch reads DECH. A Helicase C-terminal domain is found at 1471 to 1630; that stretch reads DVISKGDNIL…GLPVITNNVS (160 aa). The Cytoplasmic segment spans residues 1871–1888; it reads STNEMSKFLQLKGKWNKT. The chain crosses the membrane as a helical span at residues 1889-1909; sequence LITRDVLVICGVLGGGVWMVV. Residues 1910 to 1923 lie on the Lumenal side of the membrane; the sequence is QHFRSKVSEPVTHE. The Nuclear localization signal motif lies at 1964–1971; the sequence is KKGKSKGR. Positions 1983–2017 are binding to host eIF(iso)4E; the sequence is INMYGFDPEDFSAVRFVDPLTGATLDDNPFTDITL. The residue at position 1986 (tyrosine 1986) is an O-(5'-phospho-RNA)-tyrosine. Positions 2116–2334 constitute a Peptidase C4 domain; it reads SNSMFRGLRD…ISWGSLNIQA (219 aa). Residues histidine 2161, aspartate 2196, and cysteine 2266 each act as for nuclear inclusion protein A activity in the active site. The RdRp catalytic domain maps to 2600–2724; the sequence is WVYCDADGSQ…SVHPEYEYIL (125 aa). Residues 2883 to 2934 form a disordered region; sequence DLTEEQKQAEKEKKEREKAEKERERQKQLAFKKGKDVAQEEGKRDKEVNAGT. Residues 2886–2930 show a composition bias toward basic and acidic residues; sequence EEQKQAEKEKKEREKAEKERERQKQLAFKKGKDVAQEEGKRDKEV.

It belongs to the potyviridae genome polyprotein family. As to quaternary structure, interacts with host eIF4E protein (via cap-binding region); this interaction mediates the translation of the VPg-viral RNA conjugates. Part of a complex that comprises VPg, RNA, host EIF4E and EIF4G; this interaction mediates the translation of the VPg-viral RNA conjugates. Interacts, via N-terminal region, with host Sec24a protein in COPII-coated vesicles. This binding triggers the formation of host endoplasmic reticulum (ER)-derived viral vesicles involved in cell-to-cell viral movement. VPg is uridylylated by the polymerase and is covalently attached to the 5'-end of the genomic RNA. This uridylylated form acts as a nucleotide-peptide primer for the polymerase. In terms of processing, potyviral RNA is expressed as two polyproteins which undergo post-translational proteolytic processing. Genome polyprotein is processed by NIa-pro, P1 and HC-pro proteinases resulting in the production of at least ten individual proteins. P3N-PIPO polyprotein is cleaved by P1 and HC-pro proteinases resulting in the production of three individual proteins. The P1 proteinase and the HC-pro cleave only their respective C-termini autocatalytically. 6K1 is essential for proper proteolytic separation of P3 from CI.

Its subcellular location is the host cytoplasm. The protein resides in the host nucleus. It is found in the host cytoplasmic vesicle. The protein localises to the host membrane. It localises to the virion. The catalysed reaction is RNA(n) + a ribonucleoside 5'-triphosphate = RNA(n+1) + diphosphate. The enzyme catalyses Hydrolyzes glutaminyl bonds, and activity is further restricted by preferences for the amino acids in P6 - P1' that vary with the species of potyvirus, e.g. Glu-Xaa-Xaa-Tyr-Xaa-Gln-|-(Ser or Gly) for the enzyme from tobacco etch virus. The natural substrate is the viral polyprotein, but other proteins and oligopeptides containing the appropriate consensus sequence are also cleaved.. It catalyses the reaction Hydrolyzes a Gly-|-Gly bond at its own C-terminus, commonly in the sequence -Tyr-Xaa-Val-Gly-|-Gly, in the processing of the potyviral polyprotein.. Its function is as follows. Cysteine protease that cleaves a Gly-Gly dipeptide at its own C-terminus. Required for aphid transmission and also has proteolytic activity. Interacts with virions and aphid stylets. Acts as a suppressor of RNA-mediated gene silencing, also known as post-transcriptional gene silencing (PTGS), a mechanism of plant viral defense that limits the accumulation of viral RNAs. May have RNA-binding activity. Has helicase activity. It may be involved in replication. In terms of biological role, indispensable for virus replication. Functionally, responsible for the formation of peripheral motile host endoplasmic reticulum (ER)-derived viral vesicles called 'viral factories', seat of the viral RNA (vRNA) replication and carrying vRNA to plasmodesmata for delivery into adjacent non-infected cells; this process relies on host Sec24a-binding. Its function is as follows. Mediates the cap-independent, EIF4E-dependent translation of viral genomic RNAs. Binds to the cap-binding site of host EIF4E and thus interferes with the host EIF4E-dependent mRNA export and translation. VPg-RNA directly binds EIF4E and is a template for transcription. Also forms trimeric complexes with EIF4E-EIF4G, which are templates for translation. Has RNA-binding and proteolytic activities. In terms of biological role, RNA-dependent RNA polymerase that ensures transcription and replication of viral RNA (vRNA). Functionally, involved in aphid transmission, cell-to-cell and systemis movement, encapsidation of the viral RNA and in the regulation of viral RNA amplification. This Brassica (TuMV) protein is Genome polyprotein.